The following is a 149-amino-acid chain: Transcriptional regulator MraZ (149 aa).

SpoVT-AbrB domains are found at residues 7-54 (KYVN…GISH) and 83-126 (AVQL…QPQN).

It belongs to the MraZ family. Forms oligomers.

The protein localises to the cytoplasm. It is found in the nucleoid. This Rickettsia conorii (strain ATCC VR-613 / Malish 7) protein is Transcriptional regulator MraZ.